The sequence spans 251 residues: 3-deoxy-manno-octulosonate cytidylyltransferase (251 aa).

Belongs to the KdsB family.

It localises to the cytoplasm. The catalysed reaction is 3-deoxy-alpha-D-manno-oct-2-ulosonate + CTP = CMP-3-deoxy-beta-D-manno-octulosonate + diphosphate. The protein operates within nucleotide-sugar biosynthesis; CMP-3-deoxy-D-manno-octulosonate biosynthesis; CMP-3-deoxy-D-manno-octulosonate from 3-deoxy-D-manno-octulosonate and CTP: step 1/1. It functions in the pathway bacterial outer membrane biogenesis; lipopolysaccharide biosynthesis. Its function is as follows. Activates KDO (a required 8-carbon sugar) for incorporation into bacterial lipopolysaccharide in Gram-negative bacteria. The polypeptide is 3-deoxy-manno-octulosonate cytidylyltransferase (Rhizobium leguminosarum bv. trifolii (strain WSM2304)).